The following is a 142-amino-acid chain: ATP synthase epsilon chain (142 aa).

The protein belongs to the ATPase epsilon chain family. As to quaternary structure, F-type ATPases have 2 components, CF(1) - the catalytic core - and CF(0) - the membrane proton channel. CF(1) has five subunits: alpha(3), beta(3), gamma(1), delta(1), epsilon(1). CF(0) has three main subunits: a, b and c.

It localises to the cell inner membrane. Produces ATP from ADP in the presence of a proton gradient across the membrane. The polypeptide is ATP synthase epsilon chain (Shewanella sediminis (strain HAW-EB3)).